We begin with the raw amino-acid sequence, 188 residues long: MRTVVDYGAAIAFGVAYFVTKDFQKATWVLVAASAAALAIGYAVERRLAMLPLFFGGMALVFGTLGLIFGSDVFVKIKVTVINLALASFLVGGVLLKRQPLKVIMGEALHLPDAAWRTLTLRYGAYFAFVAIINEVVRNTQDTDTWVKFRLALLPVALVFVATQLPFMMKHMAKGDDAKAVEPPDAGF.

The next 5 helical transmembrane spans lie at 23–43 (FQKA…IGYA), 49–69 (AMLP…GLIF), 73–93 (VFVK…LVGG), 116–133 (WRTL…VAII), and 149–169 (FRLA…PFMM).

Belongs to the YciB family.

It localises to the cell inner membrane. In terms of biological role, plays a role in cell envelope biogenesis, maintenance of cell envelope integrity and membrane homeostasis. This chain is Inner membrane-spanning protein YciB, found in Caulobacter vibrioides (strain ATCC 19089 / CIP 103742 / CB 15) (Caulobacter crescentus).